Reading from the N-terminus, the 1579-residue chain is DNA-directed RNA polymerase II subunit RPB1 (1579 aa).

Residues cysteine 68, cysteine 71, cysteine 78, histidine 81, cysteine 108, cysteine 111, cysteine 149, and cysteine 171 each coordinate Zn(2+). Residues aspartate 485, aspartate 487, and aspartate 489 each contribute to the Mg(2+) site. The tract at residues proline 642–glutamate 654 is bridging helix. Lysine 1080 participates in a covalent cross-link: Glycyl lysine isopeptide (Lys-Gly) (interchain with G-Cter in ubiquitin). Residues serine 1382 to proline 1565 show a composition bias toward low complexity. Residues serine 1382–glutamine 1579 form a disordered region. 16 repeat units span residues tyrosine 1385–serine 1391, tyrosine 1392–serine 1398, tyrosine 1399–serine 1405, tyrosine 1406–serine 1412, tyrosine 1413–serine 1419, tyrosine 1420–serine 1426, tyrosine 1427–serine 1433, tyrosine 1434–serine 1440, tyrosine 1441–serine 1447, tyrosine 1448–serine 1454, tyrosine 1455–serine 1461, tyrosine 1462–serine 1468, tyrosine 1469–serine 1475, tyrosine 1476–serine 1482, tyrosine 1483–serine 1489, and tyrosine 1490–serine 1496. The C-terminal domain (CTD); 26 X 7 AA approximate tandem repeats of Y-S-P-T-S-P-[S-A-Q] stretch occupies residues tyrosine 1385–leucine 1566. Residues tyrosine 1497 to leucine 1503 form a 17; approximate repeat. 7 tandem repeats follow at residues tyrosine 1504 to serine 1510, tyrosine 1511 to serine 1517, tyrosine 1518 to serine 1524, tyrosine 1525 to serine 1531, tyrosine 1532 to glutamine 1538, tyrosine 1539 to alanine 1545, and tyrosine 1546 to glutamine 1552. A 25; approximate repeat occupies tyrosine 1553–glutamine 1559. One copy of the 26; approximate repeat lies at tyrosine 1560–leucine 1566.

This sequence belongs to the RNA polymerase beta' chain family. As to quaternary structure, component of the RNA polymerase II (Pol II) complex consisting of 12 subunits. Post-translationally, the tandem 7 residues repeats in the C-terminal domain (CTD) can be highly phosphorylated. The phosphorylation activates Pol II. Phosphorylation occurs mainly at residues 'Ser-2' and 'Ser-5' of the heptapeptide repeat. The phosphorylation state is believed to result from the balanced action of site-specific CTD kinases and phosphatase, and a 'CTD code' that specifies the position of Pol II within the transcription cycle has been proposed. In terms of processing, following transcription stress, the elongating form of RNA polymerase II (RNA pol IIo) is polyubiquitinated via 'Lys-63'-linkages on Lys-1080 at DNA damage sites without leading to degradation: ubiquitination promotes RNA pol IIo backtracking to allow access by the transcription-coupled nucleotide excision repair (TC-NER) machinery. Subsequent DEF1-dependent polyubiquitination by the elongin complex via 'Lys-48'-linkages may lead to proteasome-mediated degradation; presumably at stalled RNA pol II where TC-NER has failed, to halt global transcription and enable 'last resort' DNA repair pathways.

It localises to the nucleus. The enzyme catalyses RNA(n) + a ribonucleoside 5'-triphosphate = RNA(n+1) + diphosphate. Its function is as follows. DNA-dependent RNA polymerase catalyzes the transcription of DNA into RNA using the four ribonucleoside triphosphates as substrates. Largest and catalytic component of RNA polymerase II which synthesizes mRNA precursors and many functional non-coding RNAs. Forms the polymerase active center together with the second largest subunit. Pol II is the central component of the basal RNA polymerase II transcription machinery. It is composed of mobile elements that move relative to each other. RPB1 is part of the core element with the central large cleft, the clamp element that moves to open and close the cleft and the jaws that are thought to grab the incoming DNA template. At the start of transcription, a single-stranded DNA template strand of the promoter is positioned within the central active site cleft of Pol II. A bridging helix emanates from RPB1 and crosses the cleft near the catalytic site and is thought to promote translocation of Pol II by acting as a ratchet that moves the RNA-DNA hybrid through the active site by switching from straight to bent conformations at each step of nucleotide addition. During transcription elongation, Pol II moves on the template as the transcript elongates. Elongation is influenced by the phosphorylation status of the C-terminal domain (CTD) of Pol II largest subunit (RPB1), which serves as a platform for assembly of factors that regulate transcription initiation, elongation, termination and mRNA processing. The sequence is that of DNA-directed RNA polymerase II subunit RPB1 (RPB1) from Meyerozyma guilliermondii (strain ATCC 6260 / CBS 566 / DSM 6381 / JCM 1539 / NBRC 10279 / NRRL Y-324) (Yeast).